The following is a 592-amino-acid chain: Aspartate--tRNA ligase (592 aa).

Glu173 provides a ligand contact to L-aspartate. The segment at 197 to 200 is aspartate; the sequence is QLFK. Arg219 is a binding site for L-aspartate. ATP contacts are provided by residues 219–221 and Gln228; that span reads RDE. L-aspartate is bound at residue His448. Glu482 contacts ATP. An L-aspartate-binding site is contributed by Arg489. 534-537 is an ATP binding site; the sequence is GLDR.

It belongs to the class-II aminoacyl-tRNA synthetase family. Type 1 subfamily. In terms of assembly, homodimer.

The protein resides in the cytoplasm. The catalysed reaction is tRNA(Asp) + L-aspartate + ATP = L-aspartyl-tRNA(Asp) + AMP + diphosphate. Its function is as follows. Catalyzes the attachment of L-aspartate to tRNA(Asp) in a two-step reaction: L-aspartate is first activated by ATP to form Asp-AMP and then transferred to the acceptor end of tRNA(Asp). The protein is Aspartate--tRNA ligase of Shewanella putrefaciens (strain CN-32 / ATCC BAA-453).